The primary structure comprises 451 residues: MILLVNLFVLLSVVCILLNLAGFILGCQGAQFVSSVPRCDLVDLGEGKICFCCEEFQPAKCTDKENALKLFPVQPCSAVHLLLKKVLFALCALNALTTTVCLVAAALRYLQIFASRRPCIDESQMSAEDVEEHGRIPDPDDFVPPVPPPSYFATFYSCTPRMNRRMVGSDVIPLPHIYGARIKGVEVFCPLDPPPPYEAVVSQTDQEQESSFQMPEGPETAASPAEPVCTQITQGGALTNTTGEENTSGSTPILTLVQPPRSRRALPLLRTRSKSDPVLHHSEERATPVLSCEAATQTERRLDLATVTLRRGARPRASRCRPRSLIDYRSYIDTKLLVARFLEQSSCSMTPDIHELVENIKSVLKSDEGHMEEAITSASFLEQIMAPSQPSTSQAQELSWRRQPGLLHLRSCGDLSTFSLTARPRAERRPQQRAEAERPHSLIGVIRETVL.

The signal sequence occupies residues 1 to 29 (MILLVNLFVLLSVVCILLNLAGFILGCQG). The Lumenal portion of the chain corresponds to 30–85 (AQFVSSVPRCDLVDLGEGKICFCCEEFQPAKCTDKENALKLFPVQPCSAVHLLLKK). Residues 86–106 (VLFALCALNALTTTVCLVAAA) form a helical membrane-spanning segment. Residues 107–451 (LRYLQIFASR…LIGVIRETVL (345 aa)) are Cytoplasmic-facing. A mediates interaction with EPN1 region spans residues 107 to 451 (LRYLQIFASR…LIGVIRETVL (345 aa)). 2 short sequence motifs (PPxY; mediates interaction with ITCH) span residues 148 to 151 (PPSY) and 194 to 197 (PPPY). Over residues 204–213 (TDQEQESSFQ) the composition is skewed to polar residues. Residues 204–224 (TDQEQESSFQMPEGPETAASP) form a disordered region. K274 participates in a covalent cross-link: Glycyl lysine isopeptide (Lys-Gly) (interchain with G-Cter in ubiquitin). S275 is modified (phosphoserine). Residue K365 forms a Glycyl lysine isopeptide (Lys-Gly) (interchain with G-Cter in ubiquitin) linkage.

Belongs to the ENTREP family. As to quaternary structure, interacts with ITCH; enhances the ubiquitination of CXCR4 by ITCH and the subsequent endocytosis and desensitization of the receptor. Interacts with EPN1.

Its subcellular location is the early endosome membrane. The protein resides in the late endosome membrane. It is found in the recycling endosome membrane. The protein localises to the cell membrane. Functions as an activator of the E3 ubiquitin protein ligase ITCH in the ubiquitination of the CXCL12-activated CXCR4 receptor. Thereby, triggers CXCR4 endocytosis and desensitization, negatively regulating the CXCL12/CXCR4 signaling pathway. In Mus musculus (Mouse), this protein is Endosomal transmembrane epsin interactor 1.